The primary structure comprises 65 residues: Large ribosomal subunit protein uL29 (65 aa).

This sequence belongs to the universal ribosomal protein uL29 family.

This is Large ribosomal subunit protein uL29 from Buchnera aphidicola subsp. Baizongia pistaciae (strain Bp).